The sequence spans 603 residues: NADH-ubiquinone oxidoreductase chain 5 (603 aa).

Helical transmembrane passes span 38–58 (SIVA…MCLD), 87–107 (MMFI…SLWY), 122–142 (LIFL…QLFI), 144–160 (WEGV…WWYA), 171–191 (AILY…WFIL), 211–233 (TPLL…HPWL), 241–261 (TPVS…FLLI), 272–292 (LIQT…AVCA), 301–320 (IVAF…IGIN), 325–347 (AFLH…GSII), 370–390 (STSL…TGFY), 407–429 (WALS…MILL), 458–478 (AAGS…ASPF), 482–502 (IPLY…LTAL), and 582–602 (GMIK…LLLI).

This sequence belongs to the complex I subunit 5 family. As to quaternary structure, core subunit of respiratory chain NADH dehydrogenase (Complex I) which is composed of 45 different subunits.

Its subcellular location is the mitochondrion inner membrane. It catalyses the reaction a ubiquinone + NADH + 5 H(+)(in) = a ubiquinol + NAD(+) + 4 H(+)(out). Core subunit of the mitochondrial membrane respiratory chain NADH dehydrogenase (Complex I) which catalyzes electron transfer from NADH through the respiratory chain, using ubiquinone as an electron acceptor. Essential for the catalytic activity and assembly of complex I. This chain is NADH-ubiquinone oxidoreductase chain 5 (MT-ND5), found in Homo sapiens (Human).